Consider the following 592-residue polypeptide: Solute carrier family 13 member 2 (592 aa).

4 helical membrane-spanning segments follow: residues Ser13–Ser33, Ala53–Val73, Ser86–His106, and Leu114–Phe134. Positions Ser165–Phe177 are enriched in polar residues. A disordered region spans residues Ser165–Gln185. The next 8 membrane-spanning stretches (helical) occupy residues Met221–Ala241, Met274–Phe294, Pro324–Phe344, Gly371–Leu391, Pro450–Phe470, Ile482–Met502, Leu511–Leu531, and Ile545–Leu565.

Belongs to the SLC13A/DASS transporter (TC 2.A.47) family. NADC subfamily. In terms of tissue distribution, expressed in kidney and intestine. In kidney expressed in the proximal tubule (at protein level).

It localises to the apical cell membrane. It carries out the reaction succinate(out) + 3 Na(+)(out) = succinate(in) + 3 Na(+)(in). The enzyme catalyses fumarate(out) + 3 Na(+)(out) = fumarate(in) + 3 Na(+)(in). The catalysed reaction is 2-oxoglutarate(out) + 3 Na(+)(out) = 2-oxoglutarate(in) + 3 Na(+)(in). Its activity is regulated as follows. Li(+) decreases succinate transport in the presence of Na(+), by competing at one of the three cation binding sites. Its function is as follows. Low-affinity sodium-dicarboxylate cotransporter, that mediates the entry of citric acid cycle intermediates, such as succinate, citrate, fumarate and alpha-ketoglutarate (2-oxoglutarate) into the small intestine and renal proximal tubule. Transports the dicarboxylate into the cell with a probable stoichiometry of 3 Na(+) for 1 divalent dicarboxylate, rendering the process electrogenic. Citrate is transported in protonated form as a divalent anion, rather than the trivalent form which is normally found in blood. Has a critical role in renal dicarboxylate transport. The sequence is that of Solute carrier family 13 member 2 (SLC13A2) from Homo sapiens (Human).